A 575-amino-acid chain; its full sequence is Epsin-1 (575 aa).

A 1,2-diacyl-sn-glycero-3-phospho-(1D-myo-inositol-4,5-bisphosphate)-binding residues include Lys11, Arg25, Asn30, Arg63, and His73. Residues 12–144 (NIVHNYSEAE…RDEDRLREER (133 aa)) form the ENTH domain. Residues 150-186 (TKEKLAQTATASSAAVGSGPPPEAEQAWPQSSGEEEL) form a disordered region. Low complexity predominate over residues 157–167 (TATASSAAVGS). 3 UIM domains span residues 183–202 (EEELQLQLALAMSKEEADQP), 208–227 (EDDVQLQLALSLSREEHDKE), and 233–252 (GDDLRLQMAIEESKRETGGK). A disordered region spans residues 264-575 (FTTPAPPQAS…PAPNTNPFLL (312 aa)). 8 tandem repeats follow at residues 274-276 (DPW), 294-296 (DPW), 306-308 (DPW), 319-321 (DPW), 332-334 (DPW), 349-351 (DPW), 367-369 (DPW), and 377-379 (DPW). Residues 274 to 379 (DPWGGPASVP…APAPAFSDPW (106 aa)) are 8 X 3 AA repeats of D-P-W. Composition is skewed to low complexity over residues 279 to 299 (PASVPTAVPVAAAASDPWGGP) and 306 to 316 (DPWGGAAPTPA). A compositionally biased stretch (low complexity) spans 332 to 346 (DPWGGTPAPAAGEGP). The segment covering 367-379 (DPWAPAPAFSDPW) has biased composition (low complexity). Ser382 carries the phosphoserine modification. A [DE]-X(1,2)-F-X-X-[FL]-X-X-X-R motif motif is present at residues 401–410 (DEFSDFDRLR). A phosphoserine mark is found at Ser418 and Ser419. Position 420 is a phosphothreonine (Thr420). Residues Ser434, Ser446, and Ser453 each carry the phosphoserine modification. Residues 453-467 (SPPPAATPTPTPPTR) are compositionally biased toward pro residues. Phosphothreonine is present on residues Thr459, Thr463, and Thr469. Residue Ser472 is modified to Phosphoserine. The residue at position 493 (Thr493) is a Phosphothreonine. A run of 2 repeats spans residues 501–503 (NPF) and 517–519 (NPF). Residues 501 to 573 (NPFLPSGAPP…GPPAPNTNPF (73 aa)) are 3 X 3 AA repeats of N-P-F. Omega-N-methylarginine is present on Arg533. Over residues 556–569 (GLPPMMPPGPPAPN) the composition is skewed to pro residues. The stretch at 571-573 (NPF) is repeat 3.

The protein belongs to the epsin family. As to quaternary structure, monomer. Binds clathrin and ZBTB16/ZNF145. Binds ubiquitinated proteins. Interacts with RALBP1 in a complex also containing NUMB and TFAP2A during interphase and mitosis. Interacts with AP2B1. Interacts with UBQLN2. Interacts with ITSN1. Interacts with AP2A1 and AP2A2. Interacts with REPS2; the interaction is direct. Interacts with EPS15; the interaction is direct. Interacts with ENTREP1. In terms of processing, phosphorylated on serine and/or threonine residues in mitotic cells. Phosphorylation reduces interaction with REPS2, AP-2 and the membrane fraction. Depolarization of synaptosomes results in dephosphorylation. Post-translationally, ubiquitinated.

The protein resides in the cytoplasm. Its subcellular location is the cell membrane. It localises to the nucleus. The protein localises to the membrane. It is found in the clathrin-coated pit. Its function is as follows. Binds to membranes enriched in phosphatidylinositol 4,5-bisphosphate (PtdIns(4,5)P2). Modifies membrane curvature and facilitates the formation of clathrin-coated invaginations. Regulates receptor-mediated endocytosis. The sequence is that of Epsin-1 (Epn1) from Mus musculus (Mouse).